The primary structure comprises 295 residues: Small ribosomal subunit protein uS2 (295 aa).

Residues 263–295 (KKFSKTKNIDEETNTEFEKALNDADENKNSDNA) are disordered. A compositionally biased stretch (basic and acidic residues) spans 278–295 (EFEKALNDADENKNSDNA).

Belongs to the universal ribosomal protein uS2 family.

This chain is Small ribosomal subunit protein uS2, found in Rickettsia peacockii (strain Rustic).